A 358-amino-acid chain; its full sequence is Flap endonuclease 1 (358 aa).

An N-domain region spans residues 1-103 (MGIKRLSKLI…HEFEKRTKRR (103 aa)). Position 34 (D34) interacts with Mg(2+). The DNA site is built by R47 and R69. The Mg(2+) site is built by D85, E157, E159, D178, and D180. The interval 121–252 (LVSKYDRMNV…KRAFEYIKKY (132 aa)) is I-domain. E157 provides a ligand contact to DNA. 2 residues coordinate DNA: G230 and D232. Position 232 (D232) interacts with Mg(2+). The interval 346 to 354 (KQTRIDSFF) is interaction with PCNA.

Belongs to the XPG/RAD2 endonuclease family. FEN1 subfamily. Interacts with PCNA. Three molecules of FEN1 bind to one PCNA trimer with each molecule binding to one PCNA monomer. PCNA stimulates the nuclease activity without altering cleavage specificity. The cofactor is Mg(2+). Post-translationally, phosphorylated. Phosphorylation upon DNA damage induces relocalization to the nuclear plasma.

The protein localises to the nucleus. The protein resides in the nucleolus. Its subcellular location is the nucleoplasm. It is found in the mitochondrion. Functionally, structure-specific nuclease with 5'-flap endonuclease and 5'-3' exonuclease activities involved in DNA replication and repair. During DNA replication, cleaves the 5'-overhanging flap structure that is generated by displacement synthesis when DNA polymerase encounters the 5'-end of a downstream Okazaki fragment. It enters the flap from the 5'-end and then tracks to cleave the flap base, leaving a nick for ligation. Also involved in the long patch base excision repair (LP-BER) pathway, by cleaving within the apurinic/apyrimidinic (AP) site-terminated flap. Acts as a genome stabilization factor that prevents flaps from equilibrating into structures that lead to duplications and deletions. Also possesses 5'-3' exonuclease activity on nicked or gapped double-stranded DNA, and exhibits RNase H activity. Also involved in replication and repair of rDNA and in repairing mitochondrial DNA. This is Flap endonuclease 1 from Enterocytozoon bieneusi (strain H348) (Microsporidian parasite).